The chain runs to 594 residues: Proteasome-associated ATPase (594 aa).

The segment covering 1-10 (MMETPNNDSS) has biased composition (polar residues). Residues 1-23 (MMETPNNDSSRTPDEAAGAPDPE) form a disordered region. Residues 35–86 (ADRQVNILRDKLRHIDRQLAAATQNNSKLVGMLETAKAEILRLKNALDQEGQ) adopt a coiled-coil conformation. 282–287 (GCGKTL) contributes to the ATP binding site. The tract at residues 593-594 (YL) is docks into pockets in the proteasome alpha-ring.

It belongs to the AAA ATPase family. Homohexamer. Assembles into a hexameric ring structure that caps the 20S proteasome core. Strongly interacts with the prokaryotic ubiquitin-like protein Pup through a hydrophobic interface; the interacting region of ARC lies in its N-terminal coiled-coil domain. There is one Pup binding site per ARC hexamer ring. Upon ATP-binding, the C-terminus of ARC interacts with the alpha-rings of the proteasome core, possibly by binding to the intersubunit pockets.

Its pathway is protein degradation; proteasomal Pup-dependent pathway. Its function is as follows. ATPase which is responsible for recognizing, binding, unfolding and translocation of pupylated proteins into the bacterial 20S proteasome core particle. May be essential for opening the gate of the 20S proteasome via an interaction with its C-terminus, thereby allowing substrate entry and access to the site of proteolysis. Thus, the C-termini of the proteasomal ATPase may function like a 'key in a lock' to induce gate opening and therefore regulate proteolysis. The sequence is that of Proteasome-associated ATPase from Arthrobacter sp. (strain FB24).